Consider the following 1004-residue polypeptide: Ephrin type-A receptor 8 (1004 aa).

The N-terminal stretch at 1 to 26 (MAPARARLSPALWVVTAAAAATCVSA) is a signal peptide. The Extracellular portion of the chain corresponds to 27–541 (GRGEVNLLDT…KPRPRYDTRT (515 aa)). One can recognise an Eph LBD domain in the interval 30–208 (EVNLLDTSTI…YYKKCPAMVR (179 aa)). Fibronectin type-III domains follow at residues 327–437 (PPSA…TNQA) and 438–533 (APSQ…TGKP). N-linked (GlcNAc...) asparagine glycosylation is found at Asn-339, Asn-406, and Asn-431. The helical transmembrane segment at 542 to 562 (IVWICLTLITGLVVLLLLLIC) threads the bilayer. A mediates interaction with ANKS1A and ANKS1B region spans residues 563–569 (KKRHCGY). The Cytoplasmic segment spans residues 563-1004 (KKRHCGYSKA…SSTQGPRRHL (442 aa)). The mediates interaction with PIK3CG and required for endocytosis stretch occupies residues 588 to 643 (APPPVFLPLNHPPGKFPETQFSAEPHTYEEPGRAGRSFTREIEASRIHIEKIIGSG). Phosphotyrosine; by autocatalysis is present on Tyr-615. A Protein kinase domain is found at 634–895 (IHIEKIIGSG…HVVSVLDALV (262 aa)). ATP is bound by residues 640–648 (IGSGESGEV) and Lys-666. Asp-759 (proton acceptor) is an active-site residue. Tyr-838 is modified (phosphotyrosine; by autocatalysis). Residues 929-993 (NGDLTVGDWL…LGSIQTMRAQ (65 aa)) form the SAM domain. A PDZ-binding motif is present at residues 1002 to 1004 (RHL).

Belongs to the protein kinase superfamily. Tyr protein kinase family. Ephrin receptor subfamily. As to quaternary structure, heterotetramer upon binding of the ligand. The heterotetramer is composed of an ephrin dimer and a receptor dimer. Oligomerization is probably required to induce biological responses. May also form heterodimers with other ephrin receptors. Interacts with FYN; possible downstream effector of EPHA8 in regulation of cell adhesion. Interacts with PIK3CG; regulates integrin-mediated cell adhesion to substrate. Interacts with TIAM1; regulates clathrin-mediated endocytosis of EPHA8. Interacts with ANKS1A and ANKS1B; EPHA8 kinase activity-independent but stimulated by EPHA8 ubiquitination. Phosphorylated. Phosphorylation is stimulated upon binding of its ligands including EFNA2, EFNA3 and EFNA5. Autophosphorylation on Tyr-615 is critical for association with FYN. Autophosphorylation on Tyr-838 modulates tyrosine kinase activity. In terms of processing, ubiquitinated. Ubiquitination by CBL regulates the receptor stability and activity through proteasomal degradation. ANKS1A prevents ubiquitination and degradation. Specifically expressed in the central nervous system.

Its subcellular location is the cell membrane. The protein resides in the cell projection. It is found in the early endosome membrane. The enzyme catalyses L-tyrosyl-[protein] + ATP = O-phospho-L-tyrosyl-[protein] + ADP + H(+). Functionally, receptor tyrosine kinase which binds promiscuously GPI-anchored ephrin-A family ligands residing on adjacent cells, leading to contact-dependent bidirectional signaling into neighboring cells. The signaling pathway downstream of the receptor is referred to as forward signaling while the signaling pathway downstream of the ephrin ligand is referred to as reverse signaling. The GPI-anchored ephrin-A EFNA2, EFNA3, and EFNA5 are able to activate EPHA8 through phosphorylation. With EFNA5 may regulate integrin-mediated cell adhesion and migration on fibronectin substrate but also neurite outgrowth. During development of the nervous system also plays a role in axon guidance. Downstream effectors of the EPHA8 signaling pathway include FYN which promotes cell adhesion upon activation by EPHA8 and the MAP kinases in the stimulation of neurite outgrowth. In Mus musculus (Mouse), this protein is Ephrin type-A receptor 8 (Epha8).